The following is a 190-amino-acid chain: Myophilin (190 aa).

A disordered region spans residues 1–23 (MSNVPPPSGLSYQVKKKLEGKRD). In terms of domain architecture, Calponin-homology (CH) spans 24–130 (KDQENEALEW…RTLFALGRTC (107 aa)). The Calponin-like repeat unit spans residues 165–189 (VSLQYGSNKGASQAGINMGKQRMIM).

It belongs to the calponin family. Muscle specific.

This chain is Myophilin, found in Echinococcus granulosus (Hydatid tapeworm).